Consider the following 476-residue polypeptide: Rab-3A-interacting protein (476 aa).

Phosphoserine; by PKB/AKT1 occurs at positions 163 and 165. The stretch at 165 to 260 forms a coiled coil; the sequence is SVLEVREKGY…EVAALKTLVL (96 aa). The disordered stretch occupies residues 262–297; that stretch reads SSPTSPTQEPLPGGKTPFKKGHTRNKSTSSAMSGSH. 4 positions are modified to phosphoserine: serine 263, serine 266, serine 288, and serine 296. Polar residues predominate over residues 287–297; that stretch reads KSTSSAMSGSH. The tract at residues 435 to 444 is important for RAB11A binding; that stretch reads TYIRYIQQGL.

Belongs to the SEC2 family. In terms of assembly, homodimer. Interacts with the N-terminal region of SSX2. Interacts with the GDP-bound forms of RAB8A and RAB8B. The interaction with RAB8A is prevented by phosphorylation of RAB8A at 'Thr-72'. Interacts with the GDP-bound forms of RAB3A and RAB3D. Interacts with DCDC1. Interacts (via the N-terminal region) with TRAPPC14; this interaction mediates RAB3IP association with the TRAPP II complex. Forms a heterotetramer with RAB11A where RAB3IP homodimer binds two RAB11A subunits. Forms a complex with RAB11A and RAB11FIP3, probably a heterohexamer with two of each protein subunit, where Rabin8/RAB3IP and RAB11FIP3 simultaneously bind to RAB11A; the complex promotes preciliary trafficking. Forms a complex containing RAB11A, ASAP1, RAB3IP, RAP11FIP3 and ARF4; the complex promotes preciliary trafficking; the complex binds to RHO in photoreceptor cells and promotes RHO ciliary transport. Post-translationally, phosphorylated by AKT1; the phosphorylation alters its GEF activity. Expressed in brain, kidney, heart, pancreas and placenta. Not detected in skeletal muscle or liver.

The protein resides in the cytoplasm. It is found in the nucleus. Its subcellular location is the cytoskeleton. It localises to the cell projection. The protein localises to the lamellipodium. The protein resides in the vesicle. It is found in the microtubule organizing center. Its subcellular location is the centrosome. Phosphorylation by ATK1 alters its GEF activity. Complex formation with RAB11A and RAB11FIP3 and ciliogenesis function are competitively inhibited by RAB11A-WDR44 interaction. Functionally, guanine nucleotide exchange factor (GEF) which may activate RAB8A and RAB8B. Promotes the exchange of GDP to GTP, converting inactive GDP-bound Rab proteins into their active GTP-bound form. Mediates the release of GDP from RAB8A and RAB8B but not from RAB3A or RAB5. Modulates actin organization and promotes polarized transport of RAB8A-specific vesicles to the cell surface. Together with RAB11A, RAB8A, the exocyst complex, PARD3, PRKCI, ANXA2, CDC42 and DNMBP promotes transcytosis of PODXL to the apical membrane initiation sites (AMIS), apical surface formation and lumenogenesis. Part of the ciliary targeting complex containing Rab11, ASAP1, RAB3IP and RAB11FIP3 and ARF4 that promotes RAB3IP preciliary vesicle trafficking to mother centriole and ciliogenesis initiation. This chain is Rab-3A-interacting protein, found in Homo sapiens (Human).